Here is a 284-residue protein sequence, read N- to C-terminus: uncharacterized protein (284 aa).

A signal peptide spans 1–21 (MKTTMLMLVLLVCSYIHYVCA). The next 3 membrane-spanning stretches (helical) occupy residues 88-108 (AGPF…FLWA), 144-164 (ALGV…LGVW), and 212-232 (VFTT…SPTY).

The protein localises to the membrane. This is an uncharacterized protein from Schizosaccharomyces pombe (strain 972 / ATCC 24843) (Fission yeast).